The chain runs to 185 residues: Bacteriocin UviA (185 aa).

In terms of biological role, may have a role in bacteriocin secretion or immunity. The sequence is that of Bacteriocin UviA (uviA) from Clostridium perfringens.